The chain runs to 412 residues: Early growth response protein 2b (412 aa).

Residues 269 to 299 (YTPQNLPLRPILRPRKYPNRPSKTPVHERPY) are disordered. C2H2-type zinc fingers lie at residues 299-323 (YPCP…IRIH), 329-351 (FQCR…IRTH), and 357-379 (FACD…TKIH). The segment at 371–412 (ERKRHTKIHLRQKERKSSSSSTGVSSSERGVATSICSSSSNQ) is disordered. A compositionally biased stretch (basic residues) spans 374–384 (RHTKIHLRQKE). Over residues 388-401 (SSSSTGVSSSERGV) the composition is skewed to low complexity.

Belongs to the EGR C2H2-type zinc-finger protein family.

It localises to the nucleus. Its function is as follows. Sequence-specific DNA-binding transcription factor. Binds to two specific DNA sites located in the promoter region of HOXA4. In Danio rerio (Zebrafish), this protein is Early growth response protein 2b (egr2b).